The sequence spans 421 residues: Putative aspartate aminotransferase, cytoplasmic 2 (421 aa).

Lysine 249 bears the N6-(pyridoxal phosphate)lysine mark.

This sequence belongs to the class-I pyridoxal-phosphate-dependent aminotransferase family. Homodimer. The cofactor is pyridoxal 5'-phosphate.

Its subcellular location is the cytoplasm. The enzyme catalyses L-aspartate + 2-oxoglutarate = oxaloacetate + L-glutamate. The sequence is that of Putative aspartate aminotransferase, cytoplasmic 2 (GOT1L1) from Homo sapiens (Human).